Reading from the N-terminus, the 377-residue chain is Probable isocitrate dehydrogenase [NAD] subunit alpha, mitochondrial (377 aa).

4 residues coordinate substrate: arginine 131, arginine 141, arginine 162, and aspartate 249. Residues aspartate 249, aspartate 273, and aspartate 277 each coordinate Mg(2+).

This sequence belongs to the isocitrate and isopropylmalate dehydrogenases family. As to quaternary structure, heterooligomer of subunits alpha, beta, and gamma in the apparent ratio of 2:1:1. Requires Mg(2+) as cofactor. The cofactor is Mn(2+).

It localises to the mitochondrion. The enzyme catalyses D-threo-isocitrate + NAD(+) = 2-oxoglutarate + CO2 + NADH. Probable catalytic subunit of the enzyme which catalyzes the decarboxylation of isocitrate (ICT) into alpha-ketoglutarate. This Drosophila melanogaster (Fruit fly) protein is Probable isocitrate dehydrogenase [NAD] subunit alpha, mitochondrial.